Reading from the N-terminus, the 1075-residue chain is Protein EXPORTIN 1A (1075 aa).

An Importin N-terminal domain is found at 37-103 (ADQILRDLQA…KNYISEVIVQ (67 aa)). 12 HEAT repeats span residues 91–130 (DGMKNYISEVIVQLSSNEASFRSERLYVNKLNVILVQIVK), 135–171 (AKWTSFIPDLVAAAKTSETICENCMAILKLLSEEVFD), 232–267 (IFESTLLETLLKFFPVPAYRNLTIQCLTEVAALNFG), 336–373 (SLLLAGLEYLINISYVDDTEVFKVCLDYWNSLVLELFD), 388–425 (MGLQPFLPGMVDGLGSQVMQRRQLYSHPMSKLRGLMIN), 474–513 (DTEKQMLRKLNKQLSGEEWAWNNLNTLCWAIGSISGSMAE), 563–600 (KFLKTVVNKLFEFMHETHPGVQDMACDTFLKIVQKCKR), 612–649 (PFVSELLTGLATTVQDLEPHQIHSFYESVGNMIQAESD), 682–719 (LKDQVVIRTVLNILQTNTSAATSLGTYFLSQISLIFLD), 756–793 (RETLKLIETFLDKAEDQPHIGKQFVPPMMESVLGDYAR), 798–835 (ARESEVLSLFATIINKYKATMLDDVPHIFEAVFQCTLE), and 894–934 (ETGL…VLTD).

Belongs to the exportin family. As to quaternary structure, interacts with RAN1. As to expression, expressed ubiquitously, with higher levels in stems, inflorescences and roots. Present in mature pollen grains, unpollinated pistils, and 2-week-old seedlings.

The protein localises to the nucleus. It is found in the nuclear pore complex. The protein resides in the nucleus membrane. Functionally, receptor for the leucine-rich nuclear export signal (NES). Binds cooperatively to the NES on its target protein and to the small GTPase Ran in its active GTP-bound form. Required for the maternal-to-embryonic transition and during gametophyte development. Involved in heat-induced oxidative stress basal resistance. The polypeptide is Protein EXPORTIN 1A (Arabidopsis thaliana (Mouse-ear cress)).